Reading from the N-terminus, the 932-residue chain is von Willebrand factor A domain-containing protein DDB_G0292028 (932 aa).

The interval 1 to 49 is disordered; the sequence is MNFIKKVIGGGSSKSKTDIKIEDEQHEQQHEQQHEKQQIPDKISTSKVN. Positions 15 to 39 are enriched in basic and acidic residues; the sequence is SKTDIKIEDEQHEQQHEQQHEKQQI. The VIT domain maps to 95–222; it reads LTSPGLNTKV…DVTVNITITS (128 aa). Residues 342 to 521 enclose the VWFA domain; it reads EFIFVLDCSG…IAMQPTLSNI (180 aa). Disordered regions lie at residues 661-752 and 800-834; these read QQIN…SQAQ and TSQI…STSS. Residues 677 to 686 show a composition bias toward polar residues; the sequence is TRVQGSSSVF. Over residues 815–834 the composition is skewed to low complexity; sequence SSSPTIQKSSSLPSRPSTSS.

The sequence is that of von Willebrand factor A domain-containing protein DDB_G0292028 from Dictyostelium discoideum (Social amoeba).